The chain runs to 500 residues: Probable malate:quinone oxidoreductase (500 aa).

The protein belongs to the MQO family. It depends on FAD as a cofactor.

The catalysed reaction is (S)-malate + a quinone = a quinol + oxaloacetate. The protein operates within carbohydrate metabolism; tricarboxylic acid cycle; oxaloacetate from (S)-malate (quinone route): step 1/1. In Bacillus cereus (strain G9842), this protein is Probable malate:quinone oxidoreductase.